The following is a 383-amino-acid chain: Putative F-box protein At1g77650 (383 aa).

One can recognise an F-box domain in the interval 1–47; sequence MAFLSLPSDVVEEFLFKTPIESLVLCKPTCKQLYALCNDKRFIYNHL.

In Arabidopsis thaliana (Mouse-ear cress), this protein is Putative F-box protein At1g77650.